The sequence spans 63 residues: Translational regulator CsrA (63 aa).

The protein belongs to the CsrA/RsmA family. Homodimer; the beta-strands of each monomer intercalate to form a hydrophobic core, while the alpha-helices form wings that extend away from the core.

The protein localises to the cytoplasm. Its function is as follows. A key translational regulator that binds mRNA to regulate translation initiation and/or mRNA stability. Mediates global changes in gene expression, shifting from rapid growth to stress survival by linking envelope stress, the stringent response and the catabolite repression systems. Usually binds in the 5'-UTR; binding at or near the Shine-Dalgarno sequence prevents ribosome-binding, repressing translation, binding elsewhere in the 5'-UTR can activate translation and/or stabilize the mRNA. Its function is antagonized by small RNA(s). In Alteromonas mediterranea (strain DSM 17117 / CIP 110805 / LMG 28347 / Deep ecotype), this protein is Translational regulator CsrA.